Consider the following 817-residue polypeptide: LPS-assembly protein LptD (817 aa).

Positions M1–A45 are cleaved as a signal peptide.

The protein belongs to the LptD family. In terms of assembly, component of the lipopolysaccharide transport and assembly complex. Interacts with LptE and LptA.

The protein resides in the cell outer membrane. In terms of biological role, together with LptE, is involved in the assembly of lipopolysaccharide (LPS) at the surface of the outer membrane. In Acidovorax sp. (strain JS42), this protein is LPS-assembly protein LptD.